The chain runs to 451 residues: Exodeoxyribonuclease 7 large subunit (451 aa).

It belongs to the XseA family. Heterooligomer composed of large and small subunits.

The protein resides in the cytoplasm. It carries out the reaction Exonucleolytic cleavage in either 5'- to 3'- or 3'- to 5'-direction to yield nucleoside 5'-phosphates.. In terms of biological role, bidirectionally degrades single-stranded DNA into large acid-insoluble oligonucleotides, which are then degraded further into small acid-soluble oligonucleotides. This is Exodeoxyribonuclease 7 large subunit from Neisseria meningitidis serogroup A / serotype 4A (strain DSM 15465 / Z2491).